The sequence spans 458 residues: Chromosomal replication initiator protein DnaA (458 aa).

The interval 1-79 (MSLAIWQECL…ENPNHSVKIR (79 aa)) is domain I, interacts with DnaA modulators. Residues 79–120 (RLMVGNVSSVEKKPAKQIPTQAPLTNQPWEGESKAHRVPHKS) form a domain II region. Positions 92–114 (PAKQIPTQAPLTNQPWEGESKAH) are disordered. Positions 96-106 (IPTQAPLTNQP) are enriched in polar residues. Residues 121–338 (NLIKKYTFDN…GAIANISAKA (218 aa)) form a domain III, AAA+ region region. ATP is bound by residues Gly-165, Gly-167, Lys-168, and Thr-169. The tract at residues 339-458 (QFTGQGITIS…YKILIRTLSM (120 aa)) is domain IV, binds dsDNA.

Belongs to the DnaA family. In terms of assembly, oligomerizes as a right-handed, spiral filament on DNA at oriC.

The protein resides in the cytoplasm. Functionally, plays an essential role in the initiation and regulation of chromosomal replication. ATP-DnaA binds to the origin of replication (oriC) to initiate formation of the DNA replication initiation complex once per cell cycle. Binds the DnaA box (a 9 base pair repeat at the origin) and separates the double-stranded (ds)DNA. Forms a right-handed helical filament on oriC DNA; dsDNA binds to the exterior of the filament while single-stranded (ss)DNA is stabiized in the filament's interior. The ATP-DnaA-oriC complex binds and stabilizes one strand of the AT-rich DNA unwinding element (DUE), permitting loading of DNA polymerase. After initiation quickly degrades to an ADP-DnaA complex that is not apt for DNA replication. Binds acidic phospholipids. This chain is Chromosomal replication initiator protein DnaA, found in Psychromonas ingrahamii (strain DSM 17664 / CCUG 51855 / 37).